The primary structure comprises 329 residues: Acetyl-coenzyme A carboxylase carboxyl transferase subunit alpha (329 aa).

The 255-residue stretch at 40–294 (QLETLAARRR…KNALEKHLSE (255 aa)) folds into the CoA carboxyltransferase C-terminal domain.

The protein belongs to the AccA family. As to quaternary structure, acetyl-CoA carboxylase is a heterohexamer composed of biotin carboxyl carrier protein (AccB), biotin carboxylase (AccC) and two subunits each of ACCase subunit alpha (AccA) and ACCase subunit beta (AccD).

It localises to the cytoplasm. The enzyme catalyses N(6)-carboxybiotinyl-L-lysyl-[protein] + acetyl-CoA = N(6)-biotinyl-L-lysyl-[protein] + malonyl-CoA. Its pathway is lipid metabolism; malonyl-CoA biosynthesis; malonyl-CoA from acetyl-CoA: step 1/1. In terms of biological role, component of the acetyl coenzyme A carboxylase (ACC) complex. First, biotin carboxylase catalyzes the carboxylation of biotin on its carrier protein (BCCP) and then the CO(2) group is transferred by the carboxyltransferase to acetyl-CoA to form malonyl-CoA. The polypeptide is Acetyl-coenzyme A carboxylase carboxyl transferase subunit alpha (Prochlorococcus marinus (strain NATL2A)).